A 246-amino-acid chain; its full sequence is 3'(2'),5'-bisphosphate nucleotidase CysQ (246 aa).

Residues glutamate 64, aspartate 83, leucine 85, aspartate 86, and aspartate 205 each contribute to the Mg(2+) site. Glutamate 64 is a binding site for substrate. Residues leucine 85 to threonine 88 and aspartate 205 contribute to the substrate site.

Belongs to the inositol monophosphatase superfamily. CysQ family. The cofactor is Mg(2+).

Its subcellular location is the cell inner membrane. The catalysed reaction is adenosine 3',5'-bisphosphate + H2O = AMP + phosphate. Converts adenosine-3',5'-bisphosphate (PAP) to AMP. This Escherichia coli O6:H1 (strain CFT073 / ATCC 700928 / UPEC) protein is 3'(2'),5'-bisphosphate nucleotidase CysQ.